The following is a 234-amino-acid chain: Peptidase E (234 aa).

Catalysis depends on charge relay system residues Ser123, Asp138, and His160.

It belongs to the peptidase S51 family.

The protein resides in the cytoplasm. It catalyses the reaction Dipeptidase E catalyzes the hydrolysis of dipeptides Asp-|-Xaa. It does not act on peptides with N-terminal Glu, Asn or Gln, nor does it cleave isoaspartyl peptides.. Functionally, hydrolyzes dipeptides containing N-terminal aspartate residues. May play a role in allowing the cell to use peptide aspartate to spare carbon otherwise required for the synthesis of the aspartate family of amino acids. This is Peptidase E from Haemophilus influenzae (strain PittGG).